The chain runs to 314 residues: DNA-directed RNA polymerase subunit alpha (314 aa).

Residues M1–N228 form an alpha N-terminal domain (alpha-NTD) region. Residues K245–D314 are alpha C-terminal domain (alpha-CTD).

This sequence belongs to the RNA polymerase alpha chain family. Homodimer. The RNAP catalytic core consists of 2 alpha, 1 beta, 1 beta' and 1 omega subunit. When a sigma factor is associated with the core the holoenzyme is formed, which can initiate transcription.

The catalysed reaction is RNA(n) + a ribonucleoside 5'-triphosphate = RNA(n+1) + diphosphate. Its function is as follows. DNA-dependent RNA polymerase catalyzes the transcription of DNA into RNA using the four ribonucleoside triphosphates as substrates. The sequence is that of DNA-directed RNA polymerase subunit alpha from Pediococcus pentosaceus (strain ATCC 25745 / CCUG 21536 / LMG 10740 / 183-1w).